We begin with the raw amino-acid sequence, 242 residues long: Uridylate kinase (242 aa).

Residue 15–18 (KLSG) coordinates ATP. Positions 23-28 (GDEGFG) are involved in allosteric activation by GTP. UMP is bound at residue Gly57. The ATP site is built by Gly58 and Arg62. UMP is bound by residues Asp77 and 138–145 (TGNPFCTT). Positions 165, 171, and 174 each coordinate ATP.

This sequence belongs to the UMP kinase family. Homohexamer.

The protein resides in the cytoplasm. It catalyses the reaction UMP + ATP = UDP + ADP. It participates in pyrimidine metabolism; CTP biosynthesis via de novo pathway; UDP from UMP (UMPK route): step 1/1. Its activity is regulated as follows. Allosterically activated by GTP. Inhibited by UTP. Its function is as follows. Catalyzes the reversible phosphorylation of UMP to UDP. The protein is Uridylate kinase of Shewanella sp. (strain ANA-3).